Reading from the N-terminus, the 156-residue chain is Cellulose synthase operon protein D (156 aa).

Its pathway is glycan metabolism; bacterial cellulose biosynthesis. In terms of biological role, may have a major role in the perfection of crystallization, involved either in the pore structure itself or in the organization of the pores within the linear array of terminal synthesizing complexes (TCs). The protein is Cellulose synthase operon protein D (acsD) of Komagataeibacter xylinus (Gluconacetobacter xylinus).